A 1405-amino-acid chain; its full sequence is Xanthine dehydrogenase (1405 aa).

In terms of domain architecture, 2Fe-2S ferredoxin-type spans 17 to 104 (NKLTFYVNGV…GKHLITVEGI (88 aa)). [2Fe-2S] cluster-binding residues include C56, C61, C64, C86, C125, C128, C161, and C163. Residues 288–474 (FGNEQKVWFR…TKIFVPETVP (187 aa)) enclose the FAD-binding PCMH-type domain. FAD-binding positions include 316–323 (IVGGASEI), F397, 407–411 (TPAGN), D420, I464, and K483. Residues Q833 and F864 each contribute to the Mo-molybdopterin site. Substrate contacts are provided by E868 and R946. Residue R978 participates in Mo-molybdopterin binding. A substrate-binding site is contributed by F980. A1147 contributes to the Mo-molybdopterin binding site. E1333 serves as the catalytic Proton acceptor.

It belongs to the xanthine dehydrogenase family. Homodimer. It depends on Mo-molybdopterin as a cofactor. Requires [2Fe-2S] cluster as cofactor. FAD serves as cofactor.

The protein resides in the cytoplasm. It catalyses the reaction hypoxanthine + NAD(+) + H2O = xanthine + NADH + H(+). The enzyme catalyses xanthine + NAD(+) + H2O = urate + NADH + H(+). It participates in purine metabolism. Completely inhibited by allopurinol and significantly inhibited by adenine. Inhibited by Fe(2+), Cd(2+) and Zn(2+) and strongly inhibited by Cu(2+). Mg(2+) and Mo(2+) have no effect on activity. In terms of biological role, key enzyme in purine degradation. Catalyzes the oxidation of hypoxanthine to xanthine. Catalyzes the oxidation of xanthine to uric acid. Oxidizes xanthine, hypoxanthine and pterine at high rates. Can also act on purine and guanine. This Blastobotrys adeninivorans (Yeast) protein is Xanthine dehydrogenase.